The primary structure comprises 678 residues: Ribosome biogenesis protein BOP1 homolog (678 aa).

Over residues 1 to 10 (MGHSDGDHGS) the composition is skewed to basic and acidic residues. The disordered stretch occupies residues 1–73 (MGHSDGDHGS…VAPRNTIGDV (73 aa)). Over residues 24 to 63 (WSDDDDEGSLSFEDSGEGSDAESDEPDAPAVEESDSSEDE) the composition is skewed to acidic residues. WD repeat units follow at residues 343–384 (GHNG…KVWN), 386–424 (GGVVHRIAWNPSPDRHILAAVVDHDLLLLNAEVGDEDAQ), 463–505 (IHHK…SHHP), 508–548 (KLPG…KKLE), 549–588 (SGVREISSISIHPGGDNVIVGSKDGKLCWFDTDLSTRPYK), 592–631 (NHSKDITNVTFHRKYPLFASSSEDCTAYVFHGMVYSDLNQ), and 647–678 (SDGRGVLDCKFHPRQPWLFTAGADSVVRLYCD).

Belongs to the WD repeat BOP1/ERB1 family.

It is found in the nucleus. Its subcellular location is the nucleolus. The protein localises to the nucleoplasm. In terms of biological role, required for maturation of ribosomal RNAs and formation of the large ribosomal subunit. The chain is Ribosome biogenesis protein BOP1 homolog from Oryza sativa subsp. japonica (Rice).